A 647-amino-acid polypeptide reads, in one-letter code: MEAGRSADEVLYHNQSSVKLGELERYVITYELYQGDSIPADITLDSLWVKIKNTTKLSYKPAYLLGPFILYCDVRAKDYESSYKIICSADKPVFQSNLQAQQKFIAELSLHHIKPRYVWIVDIVSQILFNKETKVTFEIVVGNSKASLKRKIRCNDSLPDKACNILHTGLSVHRLTTADIWKVPRPIDMSQKSHLVILTHGFQSNVSADMEYLMEEIYKAQMNNPNERLVIKGYMKNACETEKGIKFLGVGLANYIIDELYDDSVGKISFIGHSLGGLTQTFAICYIKTKYPYFFKKVEPINFISLASPLLGIATSTPNYVKMSLSMGIIGTTGQELGLKDGNYGDKPLLYLLSEESLISVLARFKRRTLYANAVNDGIVPLYSSSLLFLDYSQLLQKLGGQTTAPCDPLFQPEVSPIGELPNHSDVANDDDGINASSWNTFWKSKENNCDKKSKRLMNASVIKSMKSVLLSPCPDAKFFSDPDARVATIIHDKIYTEKNLPPPSPTLYEGTAAKEGETRKTRKEMEEIIARRWHKGMHWRKVVVLLKPDAHNNIIVRRRFSNAYGWPVVDHLVTAHFQRDDPIASPMQDKQFAEEDINMATGGVEPNKFYSWLTKIEDPSVYHGGIVSTASQLASSWISKHSSVTD.

The active-site Charge relay system is S274. The disordered stretch occupies residues 502-523 (PPPSPTLYEGTAAKEGETRKTR). Positions 513 to 523 (AAKEGETRKTR) are enriched in basic and acidic residues.

The protein belongs to the putative lipase ROG1 family.

Its function is as follows. Involved in lipid metabolism. This chain is Putative lipase YDL109C, found in Saccharomyces cerevisiae (strain ATCC 204508 / S288c) (Baker's yeast).